The primary structure comprises 759 residues: Protein YdeP (759 aa).

[4Fe-4S] cluster is bound by residues Cys49 and Cys52.

It belongs to the prokaryotic molybdopterin-containing oxidoreductase family. Requires [4Fe-4S] cluster as cofactor. The cofactor is Mo-bis(molybdopterin guanine dinucleotide).

Probably involved in acid resistance. The polypeptide is Protein YdeP (ydeP) (Shigella flexneri).